The sequence spans 312 residues: Nodulation protein D 2 (312 aa).

Positions 6–63 constitute an HTH lysR-type domain; it reads LDLNLLVALDALMTKRSVTAAARSINLSQPAMSAAIARLRTYFGDDLFTMRGRELIPT. Positions 23–42 form a DNA-binding region, H-T-H motif; that stretch reads VTAAARSINLSQPAMSAAIA.

It belongs to the LysR transcriptional regulatory family.

Functionally, represses the expression of the nodABCIJ-nolO-noeI operon. The protein is Nodulation protein D 2 (nodD2) of Sinorhizobium fredii (strain NBRC 101917 / NGR234).